Consider the following 162-residue polypeptide: Podoplanin (162 aa).

An N-terminal signal peptide occupies residues 1–22; it reads MWKVSALLFVLGSASLWVLAEG. Residues 23–57 form a disordered region; sequence ASTGQPEDDTETTGLEGGVAMPGAEDDVVTPGTSE. Residues 23–131 are Extracellular-facing; the sequence is ASTGQPEDDT…EKDGLSTVTL (109 aa). 10 O-linked (GalNAc...) threonine glycosylation sites follow: T25, T32, T34, T35, T52, T55, T65, T66, T76, and T85. The segment covering 85-108 has biased composition (polar residues); it reads TSESTVHAQEQSPSATASNVATSH. Positions 85-119 are disordered; the sequence is TSESTVHAQEQSPSATASNVATSHSTEKVDGDTQT. 2 O-linked (GalNAc...) serine glycosylation sites follow: S86 and S88. T89 carries O-linked (GalNAc...) threonine glycosylation. Residues S96 and S98 are each glycosylated (O-linked (GalNAc...) serine). O-linked (GalNAc...) threonine glycosylation is present at T100. A glycan (O-linked (GalNAc...) serine) is linked at S102. The O-linked (GalNAc...) threonine glycan is linked to T106. 2 O-linked (GalNAc...) serine glycosylation sites follow: S107 and S109. The segment covering 109–119 has biased composition (basic and acidic residues); the sequence is STEKVDGDTQT. 4 O-linked (GalNAc...) threonine glycosylation sites follow: T110, T117, T119, and T120. The helical transmembrane segment at 132–152 threads the bilayer; sequence VGIIVGVLLAIGFIGAIIVVV. Residues 133–137 form a requires for dimerization and lipid rafts association region; the sequence is GIIVG. Over 153 to 162 the chain is Cytoplasmic; sequence MRKMSGRYSP. A requires for interaction with MSN and EZR region spans residues 154–155; it reads RK.

It belongs to the podoplanin family. In terms of assembly, homodimer. Interacts with CLEC1B; the interaction is independent of CLEC1B glycosylation and activates CLEC1B; the interaction is dependent of sialic acid on O-glycans. Interacts with CD9; this interaction is homophilic and attenuates platelet aggregation and pulmonary metastasis induced by PDPN. Interacts with LGALS8; the interaction is glycosylation-dependent; may participate in connection of the lymphatic endothelium to the surrounding extracellular matrix. Interacts with HSPA9. Interacts (via extracellular domain) with CD44; this interaction is required for PDPN-mediated directional migration and regulation of lamellipodia extension/stabilization during cell spreading and migration. Interacts (via cytoplasmic domain) with MSN and EZR; activates RHOA and promotes epithelial-mesenchymal transition. Interacts with CCL21; relocalized PDPN to the basolateral membrane. Extensively O-glycosylated. Contains sialic acid residues. O-glycosylation is necessary for platelet aggregation activity. Disialylated at Thr-52; sialic acid is critical for platelet-aggregating activity and for CLEC1B interaction. In terms of processing, the N-terminus is blocked. Post-translationally, cleaved by a metalloprotease within its extracellular (EC) domain, generating a membrane-bound C-terminal fragment (PCTF33) and an extracellular fragment. The resulting membrane-bound C-terminal fragment (PCTF33) is further processed between Val-150 and Val-151 by PSEN1/gamma-secretase generating the intracellular domain of podoplanin (PICD). In terms of tissue distribution, highly expressed in placenta, lung, skeletal muscle and brain. Weakly expressed in brain, kidney and liver. In placenta, expressed on the apical plasma membrane of endothelium. In lung, expressed in alveolar epithelium. Up-regulated in colorectal tumors and expressed in 25% of early oral squamous cell carcinomas.

The protein localises to the membrane. The protein resides in the cell projection. It localises to the lamellipodium membrane. It is found in the filopodium membrane. Its subcellular location is the microvillus membrane. The protein localises to the ruffle membrane. The protein resides in the membrane raft. It localises to the apical cell membrane. It is found in the basolateral cell membrane. Its subcellular location is the invadopodium. The protein localises to the cytoplasm. The protein resides in the cytosol. Functionally, mediates effects on cell migration and adhesion through its different partners. During development plays a role in blood and lymphatic vessels separation by binding CLEC1B, triggering CLEC1B activation in platelets and leading to platelet activation and/or aggregation. Interaction with CD9, on the contrary, attenuates platelet aggregation induced by PDPN. Through MSN or EZR interaction promotes epithelial-mesenchymal transition (EMT) leading to ERZ phosphorylation and triggering RHOA activation leading to cell migration increase and invasiveness. Interaction with CD44 promotes directional cell migration in epithelial and tumor cells. In lymph nodes (LNs), controls fibroblastic reticular cells (FRCs) adhesion to the extracellular matrix (ECM) and contraction of the actomyosin by maintaining ERM proteins (EZR; MSN and RDX) and MYL9 activation through association with unknown transmembrane proteins. Engagement of CLEC1B by PDPN promotes FRCs relaxation by blocking lateral membrane interactions leading to reduction of ERM proteins (EZR; MSN and RDX) and MYL9 activation. Through binding with LGALS8 may participate in connection of the lymphatic endothelium to the surrounding extracellular matrix. In keratinocytes, induces changes in cell morphology showing an elongated shape, numerous membrane protrusions, major reorganization of the actin cytoskeleton, increased motility and decreased cell adhesion. Controls invadopodia stability and maturation leading to efficient degradation of the extracellular matrix (ECM) in tumor cells through modulation of RHOC activity in order to activate ROCK1/ROCK2 and LIMK1/LIMK2 and inactivation of CFL1. Required for normal lung cell proliferation and alveolus formation at birth. Does not function as a water channel or as a regulator of aquaporin-type water channels. Does not have any effect on folic acid or amino acid transport. The chain is Podoplanin from Homo sapiens (Human).